The chain runs to 388 residues: Reducing end xylose-releasing exo-oligoxylanase (388 aa).

The active-site Proton donor is the Glu70. Residue Asp263 is the Proton acceptor of the active site.

This sequence belongs to the glycosyl hydrolase 8 (cellulase D) family.

The catalysed reaction is Hydrolysis of (1-&gt;4)-beta-D-xylose residues from the reducing end of oligosaccharides.. Functionally, hydrolyzes xylooligosaccharides with a degree of polymerization of greater than or equal to 3, releasing xylose from the reducing end. Only hydrolyzes the beta anomers of xylooligosaccharides, with inversion of anomeric configuration. Hydrolyzes the glucose and xylose-based trisaccharides where xylose is located at the -1 subsite, GXX, XXG and GXG. Does not hydrolyze xylan, chitosan, lichenan, curdlan or carboxymethylcellulose. This Halalkalibacterium halodurans (strain ATCC BAA-125 / DSM 18197 / FERM 7344 / JCM 9153 / C-125) (Bacillus halodurans) protein is Reducing end xylose-releasing exo-oligoxylanase.